Consider the following 401-residue polypeptide: Probable tRNA sulfurtransferase (401 aa).

The THUMP domain occupies 60–165 (EAVMARLKHV…EDATYLTFRD (106 aa)). Residues 183–184 (MI), 208–209 (HF), Arg-265, Gly-287, and Gln-296 contribute to the ATP site.

The protein belongs to the ThiI family.

The protein resides in the cytoplasm. The catalysed reaction is [ThiI sulfur-carrier protein]-S-sulfanyl-L-cysteine + a uridine in tRNA + 2 reduced [2Fe-2S]-[ferredoxin] + ATP + H(+) = [ThiI sulfur-carrier protein]-L-cysteine + a 4-thiouridine in tRNA + 2 oxidized [2Fe-2S]-[ferredoxin] + AMP + diphosphate. It catalyses the reaction [ThiS sulfur-carrier protein]-C-terminal Gly-Gly-AMP + S-sulfanyl-L-cysteinyl-[cysteine desulfurase] + AH2 = [ThiS sulfur-carrier protein]-C-terminal-Gly-aminoethanethioate + L-cysteinyl-[cysteine desulfurase] + A + AMP + 2 H(+). Its pathway is cofactor biosynthesis; thiamine diphosphate biosynthesis. In terms of biological role, catalyzes the ATP-dependent transfer of a sulfur to tRNA to produce 4-thiouridine in position 8 of tRNAs, which functions as a near-UV photosensor. Also catalyzes the transfer of sulfur to the sulfur carrier protein ThiS, forming ThiS-thiocarboxylate. This is a step in the synthesis of thiazole, in the thiamine biosynthesis pathway. The sulfur is donated as persulfide by IscS. This Bacillus licheniformis (strain ATCC 14580 / DSM 13 / JCM 2505 / CCUG 7422 / NBRC 12200 / NCIMB 9375 / NCTC 10341 / NRRL NRS-1264 / Gibson 46) protein is Probable tRNA sulfurtransferase.